We begin with the raw amino-acid sequence, 400 residues long: CCA-adding enzyme (400 aa).

Positions 28 and 31 each coordinate ATP. The CTP site is built by Gly28 and Arg31. 2 residues coordinate Mg(2+): Asp41 and Asp43. Residues Arg112, Asp155, Arg158, Arg161, and Arg164 each coordinate ATP. 5 residues coordinate CTP: Arg112, Asp155, Arg158, Arg161, and Arg164.

It belongs to the tRNA nucleotidyltransferase/poly(A) polymerase family. Bacterial CCA-adding enzyme type 3 subfamily. In terms of assembly, homodimer. Mg(2+) is required as a cofactor.

It catalyses the reaction a tRNA precursor + 2 CTP + ATP = a tRNA with a 3' CCA end + 3 diphosphate. The catalysed reaction is a tRNA with a 3' CCA end + 2 CTP + ATP = a tRNA with a 3' CCACCA end + 3 diphosphate. Its function is as follows. Catalyzes the addition and repair of the essential 3'-terminal CCA sequence in tRNAs without using a nucleic acid template. Adds these three nucleotides in the order of C, C, and A to the tRNA nucleotide-73, using CTP and ATP as substrates and producing inorganic pyrophosphate. tRNA 3'-terminal CCA addition is required both for tRNA processing and repair. Also involved in tRNA surveillance by mediating tandem CCA addition to generate a CCACCA at the 3' terminus of unstable tRNAs. While stable tRNAs receive only 3'-terminal CCA, unstable tRNAs are marked with CCACCA and rapidly degraded. The sequence is that of CCA-adding enzyme from Staphylococcus aureus (strain MRSA252).